We begin with the raw amino-acid sequence, 156 residues long: Ribosome maturation factor RimP (156 aa).

The protein belongs to the RimP family.

Its subcellular location is the cytoplasm. In terms of biological role, required for maturation of 30S ribosomal subunits. This is Ribosome maturation factor RimP from Gloeobacter violaceus (strain ATCC 29082 / PCC 7421).